Reading from the N-terminus, the 417-residue chain is NADH-quinone oxidoreductase subunit D (417 aa).

Belongs to the complex I 49 kDa subunit family. As to quaternary structure, NDH-1 is composed of 14 different subunits. Subunits NuoB, C, D, E, F, and G constitute the peripheral sector of the complex.

The protein resides in the cell inner membrane. It carries out the reaction a quinone + NADH + 5 H(+)(in) = a quinol + NAD(+) + 4 H(+)(out). Its function is as follows. NDH-1 shuttles electrons from NADH, via FMN and iron-sulfur (Fe-S) centers, to quinones in the respiratory chain. The immediate electron acceptor for the enzyme in this species is believed to be ubiquinone. Couples the redox reaction to proton translocation (for every two electrons transferred, four hydrogen ions are translocated across the cytoplasmic membrane), and thus conserves the redox energy in a proton gradient. The protein is NADH-quinone oxidoreductase subunit D of Azoarcus sp. (strain BH72).